The sequence spans 356 residues: D-alanine--D-alanine ligase (356 aa).

Residues 134–339 (KQLFAHRGLP…YADLITKLIE (206 aa)) form the ATP-grasp domain. 167–222 (KDKLEFPVFVKPANLGSSVGISKCNNEEELKSGIEEAFQFDRKLVIEQGIEAREIE) is an ATP binding site. Mg(2+) is bound by residues Asp293, Glu306, and Asn308.

This sequence belongs to the D-alanine--D-alanine ligase family. Mg(2+) is required as a cofactor. It depends on Mn(2+) as a cofactor.

It localises to the cytoplasm. The enzyme catalyses 2 D-alanine + ATP = D-alanyl-D-alanine + ADP + phosphate + H(+). It functions in the pathway cell wall biogenesis; peptidoglycan biosynthesis. In terms of biological role, cell wall formation. This chain is D-alanine--D-alanine ligase, found in Staphylococcus carnosus (strain TM300).